Here is a 183-residue protein sequence, read N- to C-terminus: Ribose 1,5-bisphosphate phosphokinase PhnN (183 aa).

Position 6-13 (6-13) interacts with ATP; sequence GPSGAGKD.

It belongs to the ribose 1,5-bisphosphokinase family.

The enzyme catalyses alpha-D-ribose 1,5-bisphosphate + ATP = 5-phospho-alpha-D-ribose 1-diphosphate + ADP. The protein operates within metabolic intermediate biosynthesis; 5-phospho-alpha-D-ribose 1-diphosphate biosynthesis; 5-phospho-alpha-D-ribose 1-diphosphate from D-ribose 5-phosphate (route II): step 3/3. In terms of biological role, catalyzes the phosphorylation of ribose 1,5-bisphosphate to 5-phospho-D-ribosyl alpha-1-diphosphate (PRPP). The sequence is that of Ribose 1,5-bisphosphate phosphokinase PhnN from Agrobacterium fabrum (strain C58 / ATCC 33970) (Agrobacterium tumefaciens (strain C58)).